Consider the following 305-residue polypeptide: UDP-3-O-acyl-N-acetylglucosamine deacetylase (305 aa).

Zn(2+) contacts are provided by H79, H238, and D242. H265 acts as the Proton donor in catalysis.

It belongs to the LpxC family. Zn(2+) serves as cofactor.

It carries out the reaction a UDP-3-O-[(3R)-3-hydroxyacyl]-N-acetyl-alpha-D-glucosamine + H2O = a UDP-3-O-[(3R)-3-hydroxyacyl]-alpha-D-glucosamine + acetate. Its pathway is glycolipid biosynthesis; lipid IV(A) biosynthesis; lipid IV(A) from (3R)-3-hydroxytetradecanoyl-[acyl-carrier-protein] and UDP-N-acetyl-alpha-D-glucosamine: step 2/6. In terms of biological role, catalyzes the hydrolysis of UDP-3-O-myristoyl-N-acetylglucosamine to form UDP-3-O-myristoylglucosamine and acetate, the committed step in lipid A biosynthesis. In Shigella dysenteriae serotype 1 (strain Sd197), this protein is UDP-3-O-acyl-N-acetylglucosamine deacetylase.